A 918-amino-acid chain; its full sequence is Isoleucine--tRNA ligase (918 aa).

The short motif at 59 to 69 is the 'HIGH' region element; sequence PYANGHLHIGH. Glutamate 570 is an L-isoleucyl-5'-AMP binding site. The 'KMSKS' region signature appears at 611–615; that stretch reads KMSKS. Residue lysine 614 participates in ATP binding. Residues cysteine 893, cysteine 896, cysteine 908, and cysteine 911 each coordinate Zn(2+).

It belongs to the class-I aminoacyl-tRNA synthetase family. IleS type 1 subfamily. Monomer. The cofactor is Zn(2+).

The protein resides in the cytoplasm. The enzyme catalyses tRNA(Ile) + L-isoleucine + ATP = L-isoleucyl-tRNA(Ile) + AMP + diphosphate. Catalyzes the attachment of isoleucine to tRNA(Ile). As IleRS can inadvertently accommodate and process structurally similar amino acids such as valine, to avoid such errors it has two additional distinct tRNA(Ile)-dependent editing activities. One activity is designated as 'pretransfer' editing and involves the hydrolysis of activated Val-AMP. The other activity is designated 'posttransfer' editing and involves deacylation of mischarged Val-tRNA(Ile). In Campylobacter concisus (strain 13826), this protein is Isoleucine--tRNA ligase.